A 166-amino-acid polypeptide reads, in one-letter code: Small ribosomal subunit protein uS3m (166 aa).

Residues 1 to 25 constitute a mitochondrion transit peptide; sequence MLRSLQHVESHINQCRRISTTSTLL.

The protein belongs to the universal ribosomal protein uS3 family. As to quaternary structure, component of the mitochondrial ribosome small subunit (28S) which comprises a 12S rRNA and about 30 distinct proteins.

The protein resides in the mitochondrion. This chain is Small ribosomal subunit protein uS3m (mrps-24), found in Caenorhabditis briggsae.